The primary structure comprises 103 residues: Acylphosphatase-2 (103 aa).

Ser-2 carries the N-acetylserine modification. Residues Ser-13–Tyr-103 enclose the Acylphosphatase-like domain. The residue at position 26 (Cys-26) is an S-glutathionyl cysteine; alternate. Active-site residues include Arg-28 and Asn-46.

The protein belongs to the acylphosphatase family. In terms of assembly, monomer (TU1) or homodimer (TU3) in absence of reducing factors; disulfide linked.

The enzyme catalyses an acyl phosphate + H2O = a carboxylate + phosphate + H(+). Its function is as follows. Its physiological role is not yet clear. This is Acylphosphatase-2 (ACYP2) from Meleagris gallopavo (Wild turkey).